Consider the following 83-residue polypeptide: Defensin-like protein 194 (83 aa).

The first 27 residues, 1 to 27, serve as a signal peptide directing secretion; sequence MAMKSVSNFAIFLILFLVTSEISEIEA. 4 cysteine pairs are disulfide-bonded: cysteine 32–cysteine 78, cysteine 44–cysteine 68, cysteine 53–cysteine 73, and cysteine 57–cysteine 75.

Belongs to the DEFL family. Protease inhibitor I18 (RTI/MTI-2) subfamily.

It localises to the secreted. The protein is Defensin-like protein 194 (ATTI3) of Arabidopsis thaliana (Mouse-ear cress).